A 919-amino-acid chain; its full sequence is MFS-type transporter clz9 (919 aa).

Polar residues predominate over residues 1–11 (MAASTKPTTKL). The interval 1-33 (MAASTKPTTKLSTEEDDVSRRDSESSADFMKSN) is disordered. The helical transmembrane segment at 69 to 89 (VVASFAAAISPFSTSTYYPVV) threads the bilayer. The N-linked (GlcNAc...) asparagine glycan is linked to Asn-104. Helical transmembrane passes span 132–152 (PMFL…ALQN), 192–212 (LIYA…IGGL), and 222–242 (VFWF…IFFG). Residue Asn-260 is glycosylated (N-linked (GlcNAc...) asparagine). Transmembrane regions (helical) follow at residues 303-323 (FILS…TSVL), 333-353 (YDAV…LLAY), 393-413 (LGFV…YGWQ), and 418-438 (APLA…TGVM). Residue Asn-461 is glycosylated (N-linked (GlcNAc...) asparagine). Residues 465-485 (LLLGAGAVAVVGPLNKSAGIG) form a helical membrane-spanning segment. The region spanning 641-809 (REWVTLIQGI…FTSANICSSF (169 aa)) is the DDE-1 domain. Residues 840–897 (EAPWEAKTPSNRKKKQIQKRGTLTKGEGEDTLAQKEADQQIEREQRQGGEQSGRSRQA) form a disordered region. Basic and acidic residues predominate over residues 865 to 886 (GEGEDTLAQKEADQQIEREQRQ). Residues 887 to 896 (GGEQSGRSRQ) are compositionally biased toward low complexity. Residue Asn-915 is glycosylated (N-linked (GlcNAc...) asparagine).

It belongs to the major facilitator superfamily. CAR1 family.

The protein resides in the membrane. In terms of biological role, MFS-type transporter; part of the gene cluster that mediates the biosynthesis of squalestatin S1 (SQS1, also known as zaragozic acid A), a heavily oxidized fungal polyketide that offers potent cholesterol lowering activity by targeting squalene synthase (SS). This is MFS-type transporter clz9 from Cochliobolus lunatus (Filamentous fungus).